The sequence spans 379 residues: Gonadotropin-releasing hormone II receptor (379 aa).

Residues 1–40 (MSAGNGTPWGSAAGEESWAASGVAVEGSELPTFSAAAKVR) are Extracellular-facing. A helical membrane pass occupies residues 41-60 (VGVTIVLFVSSAGGNLAVLW). Topologically, residues 61–76 (SVTRPQPSQLRPSPVR) are cytoplasmic. The helical transmembrane segment at 77–96 (TLFAHLAAADLLVTFVVMPL) threads the bilayer. The Extracellular segment spans residues 97 to 114 (DATWNITVQWLAEDIACR). N101 carries an N-linked (GlcNAc...) asparagine glycan. An intrachain disulfide couples C113 to C188. A helical transmembrane segment spans residues 115 to 136 (TLMFLKLMAMYSAAFLPVVIGL). Over 137–160 (DRQAAVLNPLGSRSGVRKLLGAAW) the chain is Cytoplasmic. The helical transmembrane segment at 161-178 (GLSFLLALPQLFLFHTVH) threads the bilayer. The Extracellular portion of the chain corresponds to 179–204 (RAGPVPFTQCVTKGSFKARWQETTYN). A helical membrane pass occupies residues 205–224 (LFTFRCLFLLPLTAMAICYS). Residues 225 to 278 (HIVLSVSSPQTRKGSHAPAGEFALCRSFDNCPRVRLWALRLALLILLTFILCWT) lie on the Cytoplasmic side of the membrane. Residues 279-297 (PYYLLGLWYWFSPTMLTEV) form a helical membrane-spanning segment. Residues 298-303 (PPSLSH) lie on the Extracellular side of the membrane. The helical transmembrane segment at 304–323 (ILFLFGLLNAPLDPLLYGAF) threads the bilayer. The Cytoplasmic portion of the chain corresponds to 324–379 (TLGCQRGHQELSIDSSNEGSGRMLQQEIHALRQQEVQKTVTSRSAGETKDISITSI).

Belongs to the G-protein coupled receptor 1 family. Post-translationally, phosphorylated on the C-terminal cytoplasmic tail.

The protein localises to the cell membrane. Functionally, receptor for gonadotropin releasing hormone II (GnRH II). This receptor mediates its action by association with G proteins that activate a phosphatidylinositol-calcium second messenger system. The protein is Gonadotropin-releasing hormone II receptor (GNRHR2) of Macaca mulatta (Rhesus macaque).